The primary structure comprises 704 residues: Tetratricopeptide repeat protein 12 (704 aa).

Position 71 is a phosphothreonine (T71). 3 TPR repeats span residues 105-138 (ADALKEKGNEAFVRGDYETAIFFYSEGLGKLKDM), 139-172 (KVLYTNRAQAFIKLGDYQKALVDCDWALKCDENC), and 173-206 (TKAYFHMGKAHVALKNYSKAKECYQKIEEINPKL).

Its subcellular location is the cytoplasm. Its function is as follows. Cytoplasmic protein that plays a role in the proper assembly of dynein arm complexes in motile cilia in both respiratory cells and sperm flagella. The sequence is that of Tetratricopeptide repeat protein 12 (Ttc12) from Mus musculus (Mouse).